The sequence spans 108 residues: Glutaredoxin-1 (108 aa).

The Glutaredoxin domain maps to 3 to 106 (EEFVQQRLAN…DILSSIGVLR (104 aa)). Residues Cys-23 and Cys-26 are joined by a disulfide bond.

This sequence belongs to the glutaredoxin family.

Its subcellular location is the virion. Has thioltransferase and dehydroascorbate reductase activities. This Ectromelia virus (strain Moscow) (ECTV) protein is Glutaredoxin-1 (OPG075).